Here is an 89-residue protein sequence, read N- to C-terminus: Small ribosomal subunit protein uS15 (89 aa).

The protein belongs to the universal ribosomal protein uS15 family. In terms of assembly, part of the 30S ribosomal subunit. Forms a bridge to the 50S subunit in the 70S ribosome, contacting the 23S rRNA.

Functionally, one of the primary rRNA binding proteins, it binds directly to 16S rRNA where it helps nucleate assembly of the platform of the 30S subunit by binding and bridging several RNA helices of the 16S rRNA. Forms an intersubunit bridge (bridge B4) with the 23S rRNA of the 50S subunit in the ribosome. This is Small ribosomal subunit protein uS15 from Dictyoglomus turgidum (strain DSM 6724 / Z-1310).